The sequence spans 477 residues: Prolyl tri/tetrapeptidyl aminopeptidase (477 aa).

An N-terminal signal peptide occupies residues 1 to 27 (MRKALRSLLAASMLIGAIGAGSATAEA). The propeptide occupies 28 to 33 (ASITAP). A disordered region spans residues 448–477 (QKDEKAAKPLAPFDAKLDRVKNDKQSALRP). A compositionally biased stretch (basic and acidic residues) spans 462 to 477 (AKLDRVKNDKQSALRP).

The protein belongs to the peptidase S37 family.

It localises to the secreted. The protein resides in the cell surface. With respect to regulation, completely inhibited by the serine protease inhibitor phenylmethylsulfonyl fluoride. Partially inhibited by the serine protease inhibitor Pefabloc. Not inhibited by cysteine proteinase-specific or metalloproteinase-specific inhibitors. Not inhibited by prolinal or its derivatives. EDTA and EGTA both partially inhibit this enzyme. EDTA has no effect on activity. Functionally, has proline-specific tripeptidyl aminopeptidase and tetrapeptidyl aminopeptidase activity. Activity is highest against tripeptides containing an Ala-Pro motif. Involved in the final processing of transglutaminase, by removing either the tetrapeptide Phe-Arg-Ala-Pro left after TAMEP or SAM-P45 hydrolysis, or the tripeptide Arg-Ala-Pro left after SGMP II hydrolysis in a single step. The chain is Prolyl tri/tetrapeptidyl aminopeptidase (ptp) from Streptomyces mobaraensis (Streptoverticillium mobaraense).